A 324-amino-acid chain; its full sequence is Transmembrane protein 171 (324 aa).

4 consecutive transmembrane segments (helical) span residues 22 to 42, 57 to 77, 113 to 133, and 160 to 180; these read IFCF…LSIF, MVLK…VILA, LIFG…GIWV, and FLSL…FFVV. A compositionally biased stretch (low complexity) spans 229 to 239; it reads PESSASAVAES. Disordered regions lie at residues 229 to 248 and 279 to 304; these read PESS…LLPN and YTIS…PPRY. Residues 279–291 are compositionally biased toward polar residues; it reads YTISGTNSSSEAS.

It is found in the membrane. In Homo sapiens (Human), this protein is Transmembrane protein 171 (TMEM171).